Here is a 179-residue protein sequence, read N- to C-terminus: Acireductone dioxygenase (179 aa).

Fe(2+) is bound by residues H100, H102, E106, and H145. Ni(2+)-binding residues include H100, H102, E106, and H145.

It belongs to the acireductone dioxygenase (ARD) family. As to quaternary structure, monomer. Fe(2+) serves as cofactor. It depends on Ni(2+) as a cofactor.

The enzyme catalyses 1,2-dihydroxy-5-(methylsulfanyl)pent-1-en-3-one + O2 = 3-(methylsulfanyl)propanoate + CO + formate + 2 H(+). It carries out the reaction 1,2-dihydroxy-5-(methylsulfanyl)pent-1-en-3-one + O2 = 4-methylsulfanyl-2-oxobutanoate + formate + 2 H(+). Its pathway is amino-acid biosynthesis; L-methionine biosynthesis via salvage pathway; L-methionine from S-methyl-5-thio-alpha-D-ribose 1-phosphate: step 5/6. In terms of biological role, catalyzes 2 different reactions between oxygen and the acireductone 1,2-dihydroxy-3-keto-5-methylthiopentene (DHK-MTPene) depending upon the metal bound in the active site. Fe-containing acireductone dioxygenase (Fe-ARD) produces formate and 2-keto-4-methylthiobutyrate (KMTB), the alpha-ketoacid precursor of methionine in the methionine recycle pathway. Ni-containing acireductone dioxygenase (Ni-ARD) produces methylthiopropionate, carbon monoxide and formate, and does not lie on the methionine recycle pathway. The chain is Acireductone dioxygenase from Bacillus licheniformis (strain ATCC 14580 / DSM 13 / JCM 2505 / CCUG 7422 / NBRC 12200 / NCIMB 9375 / NCTC 10341 / NRRL NRS-1264 / Gibson 46).